The following is a 292-amino-acid chain: MFKIYNIKSRIIRENMNNKLFDKTIEHVIKYLNENIFFEKYTRISGLLQNIESRIKIISLVIFLVGSVLSKHILTLIIFNSIALILAYLSNIPLLQYLKRVYVFIPIFAGIIAIPVMFNFMTPGKDVFVILNNPHISITYEGLIYAITFTLRVATCVSFAVLIPITTQWNKVTSAIHKLGVPEVVITITNLAYRYIFLLLNFVLDMMYSRKSRVVNKLGMVESWKEAGKAIGALFIKTYQMGEDXYYAMLSRGYNGEIKHIYREEIKIKDIAFLLFSIIITALLVLFDRGIL.

Helical transmembrane passes span 57-77, 101-121, 143-163, 184-204, and 271-291; these read IISL…LTLI, VYVF…FNFM, LIYA…AVLI, VVIT…NFVL, and IAFL…DRGI.

The protein belongs to the CbiQ family.

The protein resides in the cell membrane. This is an uncharacterized protein from Methanocaldococcus jannaschii (strain ATCC 43067 / DSM 2661 / JAL-1 / JCM 10045 / NBRC 100440) (Methanococcus jannaschii).